The chain runs to 99 residues: UPF0235 protein Sbal223_1335 (99 aa).

The protein belongs to the UPF0235 family.

In Shewanella baltica (strain OS223), this protein is UPF0235 protein Sbal223_1335.